A 91-amino-acid chain; its full sequence is Acylphosphatase (91 aa).

The Acylphosphatase-like domain occupies 5–91 (RLHAIVEGEV…KGEFTSFDTY (87 aa)). Catalysis depends on residues Arg20 and Asn38.

Belongs to the acylphosphatase family.

The enzyme catalyses an acyl phosphate + H2O = a carboxylate + phosphate + H(+). The polypeptide is Acylphosphatase (acyP) (Metallosphaera sedula (strain ATCC 51363 / DSM 5348 / JCM 9185 / NBRC 15509 / TH2)).